The sequence spans 599 residues: Elongation factor 4 (599 aa).

Residues 2 to 184 form the tr-type G domain; the sequence is KNIRNFSIIA…RLVRDIPPPE (183 aa). GTP-binding positions include 14–19 and 131–134; these read DHGKST and NKID.

Belongs to the TRAFAC class translation factor GTPase superfamily. Classic translation factor GTPase family. LepA subfamily.

Its subcellular location is the cell inner membrane. It carries out the reaction GTP + H2O = GDP + phosphate + H(+). Required for accurate and efficient protein synthesis under certain stress conditions. May act as a fidelity factor of the translation reaction, by catalyzing a one-codon backward translocation of tRNAs on improperly translocated ribosomes. Back-translocation proceeds from a post-translocation (POST) complex to a pre-translocation (PRE) complex, thus giving elongation factor G a second chance to translocate the tRNAs correctly. Binds to ribosomes in a GTP-dependent manner. This Sodalis glossinidius (strain morsitans) protein is Elongation factor 4.